Reading from the N-terminus, the 257-residue chain is Glutamate racemase (257 aa).

Residues 12–13 and 44–45 each bind substrate; these read DS and YG. C75 acts as the Proton donor/acceptor in catalysis. 76-77 serves as a coordination point for substrate; it reads NT. C185 functions as the Proton donor/acceptor in the catalytic mechanism. Residue 186–187 coordinates substrate; that stretch reads TH.

The protein belongs to the aspartate/glutamate racemases family.

The enzyme catalyses L-glutamate = D-glutamate. Its pathway is cell wall biogenesis; peptidoglycan biosynthesis. Its function is as follows. Provides the (R)-glutamate required for cell wall biosynthesis. The sequence is that of Glutamate racemase from Clostridium botulinum (strain Kyoto / Type A2).